We begin with the raw amino-acid sequence, 72 residues long: Translation initiation factor IF-1 (72 aa).

Residues 1-72 form the S1-like domain; the sequence is MSKEDMIEFS…TKGRITFRFK (72 aa).

The protein belongs to the IF-1 family. In terms of assembly, component of the 30S ribosomal translation pre-initiation complex which assembles on the 30S ribosome in the order IF-2 and IF-3, IF-1 and N-formylmethionyl-tRNA(fMet); mRNA recruitment can occur at any time during PIC assembly.

Its subcellular location is the cytoplasm. Its function is as follows. One of the essential components for the initiation of protein synthesis. Stabilizes the binding of IF-2 and IF-3 on the 30S subunit to which N-formylmethionyl-tRNA(fMet) subsequently binds. Helps modulate mRNA selection, yielding the 30S pre-initiation complex (PIC). Upon addition of the 50S ribosomal subunit IF-1, IF-2 and IF-3 are released leaving the mature 70S translation initiation complex. The sequence is that of Translation initiation factor IF-1 from Acidiphilium cryptum (strain JF-5).